Consider the following 318-residue polypeptide: Transaldolase (318 aa).

Lysine 132 functions as the Schiff-base intermediate with substrate in the catalytic mechanism.

It belongs to the transaldolase family. Type 1 subfamily. Homodimer.

The protein resides in the cytoplasm. The catalysed reaction is D-sedoheptulose 7-phosphate + D-glyceraldehyde 3-phosphate = D-erythrose 4-phosphate + beta-D-fructose 6-phosphate. The protein operates within carbohydrate degradation; pentose phosphate pathway; D-glyceraldehyde 3-phosphate and beta-D-fructose 6-phosphate from D-ribose 5-phosphate and D-xylulose 5-phosphate (non-oxidative stage): step 2/3. Its function is as follows. Transaldolase is important for the balance of metabolites in the pentose-phosphate pathway. This Shewanella sp. (strain MR-4) protein is Transaldolase.